A 984-amino-acid chain; its full sequence is Putative formate dehydrogenase SAV2309 (984 aa).

Positions 3 to 79 (EHLVVTLDGK…PMTVNTVNND (77 aa)) constitute a 2Fe-2S ferredoxin-type domain. 4 residues coordinate [2Fe-2S] cluster: Cys-37, Cys-48, Cys-51, and Cys-63. The 4Fe-4S His(Cys)3-ligated-type domain maps to 79–119 (DVKDAQKEALDRILEKHMLYCTVCDYNNGDCEIHNTMDAWG). His-95, Cys-99, Cys-102, Cys-109, Cys-147, Cys-150, Cys-153, Cys-157, Cys-190, Cys-193, Cys-196, Cys-200, Cys-264, Cys-267, Cys-271, and Cys-299 together coordinate [4Fe-4S] cluster. 4Fe-4S ferredoxin-type domains are found at residues 138–165 (PFYR…VNET) and 181–211 (NDVP…VNME). Residues 252–984 (MRKERIKKTK…YVFPGNQVDK (733 aa)) form a formate dehydrogenase region. A 4Fe-4S Mo/W bis-MGD-type domain is found at 257–313 (IKKTKTVCTYCGVGCSFEVWTKDREILKVQPSHDSPANKIVTCVKGKFSWGHINSDQ).

This sequence in the C-terminal section; belongs to the prokaryotic molybdopterin-containing oxidoreductase family. The cofactor is [2Fe-2S] cluster. [4Fe-4S] cluster serves as cofactor. Requires Mo-bis(molybdopterin guanine dinucleotide) as cofactor.

The enzyme catalyses formate + NAD(+) = CO2 + NADH. The sequence is that of Putative formate dehydrogenase SAV2309 from Staphylococcus aureus (strain Mu50 / ATCC 700699).